The following is a 417-amino-acid chain: Serine hydroxymethyltransferase (417 aa).

Residues Leu-121 and Gly-125–Leu-127 each bind (6S)-5,6,7,8-tetrahydrofolate. N6-(pyridoxal phosphate)lysine is present on Lys-230. Ser-355–Phe-357 lines the (6S)-5,6,7,8-tetrahydrofolate pocket.

Belongs to the SHMT family. Homodimer. The cofactor is pyridoxal 5'-phosphate.

The protein localises to the cytoplasm. It carries out the reaction (6R)-5,10-methylene-5,6,7,8-tetrahydrofolate + glycine + H2O = (6S)-5,6,7,8-tetrahydrofolate + L-serine. It functions in the pathway one-carbon metabolism; tetrahydrofolate interconversion. It participates in amino-acid biosynthesis; glycine biosynthesis; glycine from L-serine: step 1/1. Functionally, catalyzes the reversible interconversion of serine and glycine with tetrahydrofolate (THF) serving as the one-carbon carrier. This reaction serves as the major source of one-carbon groups required for the biosynthesis of purines, thymidylate, methionine, and other important biomolecules. Also exhibits THF-independent aldolase activity toward beta-hydroxyamino acids, producing glycine and aldehydes, via a retro-aldol mechanism. The chain is Serine hydroxymethyltransferase from Legionella pneumophila (strain Corby).